The sequence spans 375 residues: MQCALYDAGRCRSCQWITQSVNEQLSAKTADLHRLLAGLPVEQWCAPIGGPEQHFRNKAKMVVSGSVEKPLFGMLHRDGTPVDLCGCPLYPASFAPVFSALKPFIARAGLTPYNVARKRGELKYLLLTESQFDGGMMLRFVLRSETKLTQLRAALPWLRAQLPQLRVITANIQPVHMAIMEGETEIYLTDQQALAERFNDVPLWIRPQSFFQTNPTVASRLYATARDWVGQLPVRHMWDLFCGVGGFGLHCATPQMQLTGIEIAPEAIACAKQSAAELGLTRLHFQALDSTQFATAQGETPDLVLVNPPRRGIGKPLCDYLAQMAPRFIIYSSCNAQTMAQDIRHLPNYRIQRVQLFDMFPHTAHYEVLALLRRL.

[4Fe-4S] cluster contacts are provided by Cys3, Cys11, Cys14, and Cys87. Positions 212, 241, 262, and 307 each coordinate S-adenosyl-L-methionine. Residue Cys334 is the Nucleophile of the active site.

It belongs to the class I-like SAM-binding methyltransferase superfamily. RNA M5U methyltransferase family. RlmC subfamily.

It carries out the reaction uridine(747) in 23S rRNA + S-adenosyl-L-methionine = 5-methyluridine(747) in 23S rRNA + S-adenosyl-L-homocysteine + H(+). Catalyzes the formation of 5-methyl-uridine at position 747 (m5U747) in 23S rRNA. In Salmonella enteritidis PT4 (strain P125109), this protein is 23S rRNA (uracil(747)-C(5))-methyltransferase RlmC.